The primary structure comprises 178 residues: Caveolin-1 (178 aa).

Serine 2 is subject to N-acetylserine. Serine 2 carries the post-translational modification Phosphoserine. The tract at residues 2 to 94 (SGGKYVDSEG…WKASFTTFTV (93 aa)) is required for homooligomerization. The Cytoplasmic segment spans residues 2–104 (SGGKYVDSEG…TKYWFYRLLS (103 aa)). N6-acetyllysine; alternate is present on lysine 5. Lysine 5 participates in a covalent cross-link: Glycyl lysine isopeptide (Lys-Gly) (interchain with G-Cter in ubiquitin); alternate. Tyrosine 6 carries the post-translational modification Phosphotyrosine. The residue at position 9 (serine 9) is a Phosphoserine. A Phosphotyrosine; by ABL1 modification is found at tyrosine 14. Tyrosine 25 is subject to Phosphotyrosine. Glycyl lysine isopeptide (Lys-Gly) (interchain with G-Cter in ubiquitin) cross-links involve residues lysine 26 and lysine 30. Serine 37 is subject to Phosphoserine. Residues lysine 39, lysine 47, and lysine 57 each participate in a glycyl lysine isopeptide (Lys-Gly) (interchain with G-Cter in ubiquitin) cross-link. The segment at 82 to 94 (DGIWKASFTTFTV) is interaction with CAVIN3. Residues 105 to 125 (ALFGIPMALIWGIYFAILSFL) constitute an intramembrane region (helical). Topologically, residues 126 to 178 (HIWAVVPCIKSFLIEIQCISRVYSIYIHTVCDPLFEAIGKIFSNVRISLQKEI) are cytoplasmic. The interval 131–142 (VPCIKSFLIEIQ) is interacts with SPRY1, SPRY2, SPRY3 and SPRY4. S-palmitoyl cysteine attachment occurs at residues cysteine 133, cysteine 143, and cysteine 156. Residues 149 to 160 (SIYIHTVCDPLF) are interacts with SPRY1, SPRY2, and SPRY4. The interval 167–178 (FSNVRISLQKEI) is interacts with SPRY1, SPRY2, SPRY3 and SPRY4.

It belongs to the caveolin family. Homooligomer. Interacts with GLIPR2. Interacts with NOSTRIN. Interacts with SNAP25 and STX1A. Interacts (via the N-terminus) with DPP4; the interaction is direct. Interacts with CTNNB1, CDH1 and JUP. Interacts with PACSIN2; this interaction induces membrane tubulation. Interacts with SLC7A9. Interacts with BMX and BTK. Interacts with TGFBR1. Interacts with CAVIN3 (via leucine-zipper domain) in a cholesterol-sensitive manner. Interacts with CAVIN1. Interacts with EHD2 in a cholesterol-dependent manner. Forms a ternary complex with UBXN6 and VCP; mediates CAV1 targeting to lysosomes for degradation. Interacts with ABCG1; this interaction regulates ABCG1-mediated cholesterol efflux. Interacts with NEU3; this interaction enhances NEU3 sialidase activity within caveola. Interacts (via C-terminus) with SPRY1, SPRY2 (via C-terminus), SPRY3, and SPRY4. Interacts with IGFBP5; this interaction allows trafficking of IGFBP5 from the plasma membrane to the nucleus. Post-translationally, phosphorylated at Tyr-14 by ABL1 in response to oxidative stress. In terms of processing, ubiquitinated. Undergo monoubiquitination and multi- and/or polyubiquitination. Monoubiquitination of N-terminal lysines promotes integration in a ternary complex with UBXN6 and VCP which promotes oligomeric CAV1 targeting to lysosomes for degradation. Ubiquitinated by ZNRF1; leading to degradation and modulation of the TLR4-mediated immune response.

It localises to the golgi apparatus membrane. The protein localises to the cell membrane. The protein resides in the membrane. It is found in the caveola. Its subcellular location is the membrane raft. May act as a scaffolding protein within caveolar membranes. Forms a stable heterooligomeric complex with CAV2 that targets to lipid rafts and drives caveolae formation. Mediates the recruitment of CAVIN proteins (CAVIN1/2/3/4) to the caveolae. Interacts directly with G-protein alpha subunits and can functionally regulate their activity. Involved in the costimulatory signal essential for T-cell receptor (TCR)-mediated T-cell activation. Its binding to DPP4 induces T-cell proliferation and NF-kappa-B activation in a T-cell receptor/CD3-dependent manner. Recruits CTNNB1 to caveolar membranes and may regulate CTNNB1-mediated signaling through the Wnt pathway. Negatively regulates TGFB1-mediated activation of SMAD2/3 by mediating the internalization of TGFBR1 from membrane rafts leading to its subsequent degradation. Binds 20(S)-hydroxycholesterol (20(S)-OHC). In Aotus nancymaae (Ma's night monkey), this protein is Caveolin-1 (CAV1).